Here is a 587-residue protein sequence, read N- to C-terminus: 2-succinyl-5-enolpyruvyl-6-hydroxy-3-cyclohexene-1-carboxylate synthase (587 aa).

This sequence belongs to the TPP enzyme family. MenD subfamily. In terms of assembly, homodimer. The cofactor is Mg(2+). Mn(2+) is required as a cofactor. Requires thiamine diphosphate as cofactor.

The catalysed reaction is isochorismate + 2-oxoglutarate + H(+) = 5-enolpyruvoyl-6-hydroxy-2-succinyl-cyclohex-3-ene-1-carboxylate + CO2. Its pathway is quinol/quinone metabolism; 1,4-dihydroxy-2-naphthoate biosynthesis; 1,4-dihydroxy-2-naphthoate from chorismate: step 2/7. It participates in cofactor biosynthesis; phylloquinone biosynthesis. Catalyzes the thiamine diphosphate-dependent decarboxylation of 2-oxoglutarate and the subsequent addition of the resulting succinic semialdehyde-thiamine pyrophosphate anion to isochorismate to yield 2-succinyl-5-enolpyruvyl-6-hydroxy-3-cyclohexene-1-carboxylate (SEPHCHC). This chain is 2-succinyl-5-enolpyruvyl-6-hydroxy-3-cyclohexene-1-carboxylate synthase, found in Prochlorococcus marinus (strain MIT 9312).